We begin with the raw amino-acid sequence, 307 residues long: tRNA dimethylallyltransferase 2 (307 aa).

Position 9 to 16 (9 to 16 (GPTAVGKT)) interacts with ATP. Position 11–16 (11–16 (TAVGKT)) interacts with substrate. The interaction with substrate tRNA stretch occupies residues 34 to 37 (DSRQ).

It belongs to the IPP transferase family. In terms of assembly, monomer. It depends on Mg(2+) as a cofactor.

The enzyme catalyses adenosine(37) in tRNA + dimethylallyl diphosphate = N(6)-dimethylallyladenosine(37) in tRNA + diphosphate. Its function is as follows. Catalyzes the transfer of a dimethylallyl group onto the adenine at position 37 in tRNAs that read codons beginning with uridine, leading to the formation of N6-(dimethylallyl)adenosine (i(6)A). The sequence is that of tRNA dimethylallyltransferase 2 from Azobacteroides pseudotrichonymphae genomovar. CFP2.